The chain runs to 501 residues: Bifunctional purine biosynthesis protein PurH (501 aa).

Positions 1–144 (MKKRALISVF…KNFKDVVVLS (144 aa)) constitute an MGS-like domain.

Belongs to the PurH family.

The enzyme catalyses (6R)-10-formyltetrahydrofolate + 5-amino-1-(5-phospho-beta-D-ribosyl)imidazole-4-carboxamide = 5-formamido-1-(5-phospho-D-ribosyl)imidazole-4-carboxamide + (6S)-5,6,7,8-tetrahydrofolate. It carries out the reaction IMP + H2O = 5-formamido-1-(5-phospho-D-ribosyl)imidazole-4-carboxamide. It functions in the pathway purine metabolism; IMP biosynthesis via de novo pathway; 5-formamido-1-(5-phospho-D-ribosyl)imidazole-4-carboxamide from 5-amino-1-(5-phospho-D-ribosyl)imidazole-4-carboxamide (10-formyl THF route): step 1/1. Its pathway is purine metabolism; IMP biosynthesis via de novo pathway; IMP from 5-formamido-1-(5-phospho-D-ribosyl)imidazole-4-carboxamide: step 1/1. In Clostridium perfringens (strain ATCC 13124 / DSM 756 / JCM 1290 / NCIMB 6125 / NCTC 8237 / Type A), this protein is Bifunctional purine biosynthesis protein PurH.